Reading from the N-terminus, the 854-residue chain is A-kinase anchor protein 4 (854 aa).

A propeptide spanning residues 1 to 188 (MMAYSDTTMM…MTAAKNTNNN (188 aa)) is cleaved from the precursor. Residues Ser96, Ser130, Ser190, Ser213, Ser226, and Ser272 each carry the phosphoserine modification. A disordered region spans residues 184–207 (NTNNNQSPSAPPAKPPSTQRAVIS). Positions 219–232 (FYVNRLSSLVIQMA) are PKA-RI and PKA-RII subunit binding domain. The disordered stretch occupies residues 287-323 (RGTGEESREGGQKSFLYSELSNKSKSGDKQMSQRESK). Residues 288–297 (GTGEESREGG) show a composition bias toward basic and acidic residues. Residue Ser300 is modified to Phosphoserine. Phosphotyrosine is present on Tyr303. Ser304 and Ser307 each carry phosphoserine. Positions 311 to 323 (KSGDKQMSQRESK) are enriched in basic and acidic residues. The segment at 336–345 (YANQVASDMM) is PKA-RI-alpha subunit binding domain. Phosphoserine occurs at positions 342, 432, 443, 445, 447, 450, 464, and 492. Thr506 bears the Phosphothreonine mark. A phosphoserine mark is found at Ser536, Ser581, Ser627, and Ser703.

Belongs to the AKAP110 family. As to quaternary structure, interacts with PRKAR1A and PRKAR2A. Interacts with ENO4. Interacts with QRICH2. Phosphorylated by STK33 during sperm flagella assembly. In terms of tissue distribution, testis specific; only expressed in round spermatids.

Its subcellular location is the cell projection. The protein localises to the cilium. The protein resides in the flagellum. Functionally, major structural component of sperm fibrous sheath. Plays a role in sperm motility. The sequence is that of A-kinase anchor protein 4 from Homo sapiens (Human).